The sequence spans 156 residues: Small ribosomal subunit protein uS7 (156 aa).

The protein belongs to the universal ribosomal protein uS7 family. In terms of assembly, part of the 30S ribosomal subunit. Contacts proteins S9 and S11.

Its function is as follows. One of the primary rRNA binding proteins, it binds directly to 16S rRNA where it nucleates assembly of the head domain of the 30S subunit. Is located at the subunit interface close to the decoding center, probably blocks exit of the E-site tRNA. The chain is Small ribosomal subunit protein uS7 from Shewanella halifaxensis (strain HAW-EB4).